The chain runs to 202 residues: Probable pathogenesis-related protein CaO19.2336 (202 aa).

The first 20 residues, 1–20 (MKTLLFIYLQLLLLLSIIIG), serve as a signal peptide directing secretion. Residues Asn-58 and Asn-152 are each glycosylated (N-linked (GlcNAc...) asparagine). Residues 66-179 (LKEHNNKRKL…LNALYIVCSY (114 aa)) enclose the SCP domain.

It belongs to the CRISP family.

The protein localises to the secreted. Its function is as follows. Secreted protein that acts as a virulence factor during infections. This chain is Probable pathogenesis-related protein CaO19.2336, found in Candida albicans (strain SC5314 / ATCC MYA-2876) (Yeast).